Here is a 229-residue protein sequence, read N- to C-terminus: 7-cyano-7-deazaguanine synthase (229 aa).

12-22 (LSGGMDSCVCA) provides a ligand contact to ATP. Residues Cys194, Cys202, Cys205, and Cys208 each coordinate Zn(2+).

Belongs to the QueC family. Requires Zn(2+) as cofactor.

It carries out the reaction 7-carboxy-7-deazaguanine + NH4(+) + ATP = 7-cyano-7-deazaguanine + ADP + phosphate + H2O + H(+). The protein operates within purine metabolism; 7-cyano-7-deazaguanine biosynthesis. In terms of biological role, catalyzes the ATP-dependent conversion of 7-carboxy-7-deazaguanine (CDG) to 7-cyano-7-deazaguanine (preQ(0)). The sequence is that of 7-cyano-7-deazaguanine synthase from Acidobacterium capsulatum (strain ATCC 51196 / DSM 11244 / BCRC 80197 / JCM 7670 / NBRC 15755 / NCIMB 13165 / 161).